A 155-amino-acid polypeptide reads, in one-letter code: Small ribosomal subunit protein uS9 (155 aa).

The protein belongs to the universal ribosomal protein uS9 family.

This is Small ribosomal subunit protein uS9 from Rhizobium etli (strain ATCC 51251 / DSM 11541 / JCM 21823 / NBRC 15573 / CFN 42).